A 144-amino-acid polypeptide reads, in one-letter code: MRLNTLSPAAGSKHAPKRVGRGMGSGLGKTAGRGHKGQKSRSGGGVRPGFEGGQMPLKIRLPKFGFTSRRAMVTAEVRVLELAKVNGDVIDLNALKDANVITRNIQFAKIVLSGTIERPVTVKGLKVTKGARAAIEAAGGKIEE.

Residues 1 to 54 (MRLNTLSPAAGSKHAPKRVGRGMGSGLGKTAGRGHKGQKSRSGGGVRPGFEGGQ) form a disordered region. Composition is skewed to gly residues over residues 21–31 (RGMGSGLGKTA) and 42–52 (SGGGVRPGFEG).

This sequence belongs to the universal ribosomal protein uL15 family. As to quaternary structure, part of the 50S ribosomal subunit.

Its function is as follows. Binds to the 23S rRNA. This Shewanella baltica (strain OS223) protein is Large ribosomal subunit protein uL15.